The following is a 63-amino-acid chain: Defensin-like protein 278 (63 aa).

The N-terminal stretch at 1–15 (MSLVYMYMYIGVVMS) is a signal peptide. 3 disulfides stabilise this stretch: Cys31–Cys48, Cys37–Cys53, and Cys41–Cys55.

Belongs to the DEFL family.

It is found in the secreted. The sequence is that of Defensin-like protein 278 from Arabidopsis thaliana (Mouse-ear cress).